The sequence spans 326 residues: Target of rapamycin complex subunit LST8 (326 aa).

M1 carries the N-acetylmethionine modification. WD repeat units follow at residues M1–T37, H40–S80, G83–Q122, Q126–L165, and E168–V207. T51 is subject to Phosphothreonine. A Glycyl lysine isopeptide (Lys-Gly) (interchain with G-Cter in SUMO3) cross-link involves residue K86. Glycyl lysine isopeptide (Lys-Gly) (interchain with G-Cter in SUMO3) cross-links involve residues K215, K245, and K261. Residues A218–E257 form a WD 6 repeat. Residues S268–G309 form a WD 7 repeat. Residue K305 forms a Glycyl lysine isopeptide (Lys-Gly) (interchain with G-Cter in SUMO3); alternate linkage. Glycyl lysine isopeptide (Lys-Gly) (interchain with G-Cter in ubiquitin); alternate cross-links involve residues K305 and K313. K313 participates in a covalent cross-link: Glycyl lysine isopeptide (Lys-Gly) (interchain with G-Cter in SUMO1); alternate.

The protein belongs to the WD repeat LST8 family. Part of the mechanistic target of rapamycin complex 1 (mTORC1) which contains MTOR, MLST8 and RPTOR. mTORC1 associates with AKT1S1/PRAS40, which inhibits its activity. mTORC1 binds to and is inhibited by FKBP12-rapamycin. Within mTORC1, interacts directly with MTOR and RPTOR. Component of the mechanistic target of rapamycin complex 2 (mTORC2), consisting in two heterotretramers composed of MTOR, MLST8, RICTOR and MAPKAP1/SIN1. Contrary to mTORC1, mTORC2 does not bind to and is not sensitive to FKBP12-rapamycin. mTORC1 and mTORC2 associate with DEPTOR, which regulates their activity. Interacts with RHEB. Interacts with MEAK7. Interacts with SIK3. Interacts with SLC38A7; this interaction promotes the recruitment of mTORC1 to the lysosome and its subsequent activation. Phosphorylation at Thr-51 by CDK1 promotes ubiquitination by the SCF(FBXW7) complex, followed by degradation. In terms of processing, ubiquitination by the SCF(FBXW7) and SCF(FBXW11) complexes following phosphorylation at Thr-51 by CDK1, leads to its degradation by the proteasome. Ubiquitination at Lys-305 and Lys-313 by TRAF2 via 'Lys-63'-linked polyubiquitin chains inhibits formation of the mTORC2 complex, while promoting formation of the mTORC1 complex: ubiquitination disrupts the interaction between MLST8 and MAPKAP1/SIN1 to favor mTORC1 assembly. Deubiquitination at Lys-305 and Lys-313 by OTUD7B promotes MLST8 interaction with MAPKAP1/SIN1, facilitating mTORC2 assembly. Post-translationally, sumoylation with SUMO1, SUMO2 and SUMO3 promotes assembly of both mTORC1 and mTORC2 complexes.

The protein localises to the lysosome membrane. It is found in the cytoplasm. Functionally, subunit of both mTORC1 and mTORC2, which regulates cell growth and survival in response to nutrient and hormonal signals. mTORC1 is activated in response to growth factors or amino acids. In response to nutrients, mTORC1 is recruited to the lysosome membrane and promotes protein, lipid and nucleotide synthesis by phosphorylating several substrates, such as ribosomal protein S6 kinase (RPS6KB1 and RPS6KB2) and EIF4EBP1 (4E-BP1). In the same time, it inhibits catabolic pathways by phosphorylating the autophagy initiation components ULK1 and ATG13, as well as transcription factor TFEB, a master regulators of lysosomal biogenesis and autophagy. The mTORC1 complex is inhibited in response to starvation and amino acid depletion. Within mTORC1, MLST8 interacts directly with MTOR and enhances its kinase activity. In nutrient-poor conditions, stabilizes the MTOR-RPTOR interaction and favors RPTOR-mediated inhibition of MTOR activity. As part of the mTORC2 complex, transduces signals from growth factors to pathways involved in proliferation, cytoskeletal organization, lipogenesis and anabolic output. mTORC2 is also activated by growth factors, but seems to be nutrient-insensitive. In response to growth factors, mTORC2 phosphorylates and activates AGC protein kinase family members, including AKT (AKT1, AKT2 and AKT3), PKC (PRKCA, PRKCB and PRKCE) and SGK1. mTORC2 functions upstream of Rho GTPases to regulate the actin cytoskeleton, probably by activating one or more Rho-type guanine nucleotide exchange factors. mTORC2 promotes the serum-induced formation of stress-fibers or F-actin. mTORC2 plays a critical role in AKT1 activation by mediating phosphorylation of different sites depending on the context, such as 'Thr-450', 'Ser-473', 'Ser-477' or 'Thr-479', facilitating the phosphorylation of the activation loop of AKT1 on 'Thr-308' by PDPK1/PDK1 which is a prerequisite for full activation. mTORC2 regulates the phosphorylation of SGK1 at 'Ser-422'. mTORC2 also modulates the phosphorylation of PRKCA on 'Ser-657'. Within mTORC2, MLST8 acts as a bridge between MAPKAP1/SIN1 and MTOR. This chain is Target of rapamycin complex subunit LST8, found in Bos taurus (Bovine).